Consider the following 505-residue polypeptide: Glycerol kinase 2 (505 aa).

T17 contacts ADP. ATP-binding residues include T17, T18, and S19. T17 contributes to the sn-glycerol 3-phosphate binding site. R21 contributes to the ADP binding site. 4 residues coordinate sn-glycerol 3-phosphate: R87, E88, Y139, and D249. Glycerol contacts are provided by R87, E88, Y139, D249, and Q250. The ADP site is built by T271 and G314. Positions 271, 314, 318, and 415 each coordinate ATP. Positions 415 and 419 each coordinate ADP.

The protein belongs to the FGGY kinase family.

The enzyme catalyses glycerol + ATP = sn-glycerol 3-phosphate + ADP + H(+). The protein operates within polyol metabolism; glycerol degradation via glycerol kinase pathway; sn-glycerol 3-phosphate from glycerol: step 1/1. Inhibited by fructose 1,6-bisphosphate (FBP). Functionally, key enzyme in the regulation of glycerol uptake and metabolism. Catalyzes the phosphorylation of glycerol to yield sn-glycerol 3-phosphate. This Pseudomonas aeruginosa (strain ATCC 15692 / DSM 22644 / CIP 104116 / JCM 14847 / LMG 12228 / 1C / PRS 101 / PAO1) protein is Glycerol kinase 2.